A 307-amino-acid chain; its full sequence is Bifunctional protein FolD (307 aa).

Residues Gly170 to Ser172, Ser195, and Ile236 each bind NADP(+).

The protein belongs to the tetrahydrofolate dehydrogenase/cyclohydrolase family. As to quaternary structure, homodimer.

The enzyme catalyses (6R)-5,10-methylene-5,6,7,8-tetrahydrofolate + NADP(+) = (6R)-5,10-methenyltetrahydrofolate + NADPH. The catalysed reaction is (6R)-5,10-methenyltetrahydrofolate + H2O = (6R)-10-formyltetrahydrofolate + H(+). Its pathway is one-carbon metabolism; tetrahydrofolate interconversion. Functionally, catalyzes the oxidation of 5,10-methylenetetrahydrofolate to 5,10-methenyltetrahydrofolate and then the hydrolysis of 5,10-methenyltetrahydrofolate to 10-formyltetrahydrofolate. The sequence is that of Bifunctional protein FolD from Sinorhizobium fredii (strain NBRC 101917 / NGR234).